Consider the following 208-residue polypeptide: Adenylate kinase (208 aa).

10–15 (GAGKGT) is an ATP binding site. Positions 30 to 59 (STGEMLRAAVAAGTPVGLKAKDVMASGGLV) are NMP. AMP contacts are provided by residues Thr31, Arg36, 57–59 (GLV), 85–88 (GFPR), and Gln92. Residues 126–142 (SRVAEMTARGEQVRADD) form an LID region. Residue Arg127 coordinates ATP. AMP is bound by residues Arg139 and Arg150. Met178 contacts ATP.

This sequence belongs to the adenylate kinase family. As to quaternary structure, monomer.

The protein localises to the cytoplasm. It catalyses the reaction AMP + ATP = 2 ADP. It functions in the pathway purine metabolism; AMP biosynthesis via salvage pathway; AMP from ADP: step 1/1. Catalyzes the reversible transfer of the terminal phosphate group between ATP and AMP. Plays an important role in cellular energy homeostasis and in adenine nucleotide metabolism. This Nitrobacter hamburgensis (strain DSM 10229 / NCIMB 13809 / X14) protein is Adenylate kinase.